A 352-amino-acid chain; its full sequence is Photosystem II D2 protein (352 aa).

The helical transmembrane segment at 40-60 (CAYLALGGWLTGTTFVTSWYT) threads the bilayer. H117 is a chlorophyll a binding site. Residues 124–140 (GFMLRQFEIARLVGVRP) traverse the membrane as a helical segment. 2 residues coordinate pheophytin a: Q129 and N142. Residues 152 to 165 (VFVSVFLIYPLGQS) traverse the membrane as a helical segment. H197 lines the chlorophyll a pocket. A helical transmembrane segment spans residues 207–227 (GALLCAIHGATVENTLFQDGE). A plastoquinone contacts are provided by H214 and F261. H214 serves as a coordination point for Fe cation. H268 contacts Fe cation. Residues 278 to 294 (GLWMSSIGVVGLALNLR) traverse the membrane as a helical segment.

The protein belongs to the reaction center PufL/M/PsbA/D family. PSII is composed of 1 copy each of membrane proteins PsbA, PsbB, PsbC, PsbD, PsbE, PsbF, PsbH, PsbI, PsbJ, PsbK, PsbL, PsbM, PsbT, PsbX, PsbY, PsbZ, Psb30/Ycf12, peripheral proteins PsbO, CyanoQ (PsbQ), PsbU, PsbV and a large number of cofactors. It forms dimeric complexes. The D1/D2 heterodimer binds P680, chlorophylls that are the primary electron donor of PSII, and subsequent electron acceptors. It shares a non-heme iron and each subunit binds pheophytin, quinone, additional chlorophylls, carotenoids and lipids. There is also a Cl(-1) ion associated with D1 and D2, which is required for oxygen evolution. The PSII complex binds additional chlorophylls, carotenoids and specific lipids. is required as a cofactor.

The protein resides in the cellular thylakoid membrane. It catalyses the reaction 2 a plastoquinone + 4 hnu + 2 H2O = 2 a plastoquinol + O2. Functionally, photosystem II (PSII) is a light-driven water:plastoquinone oxidoreductase that uses light energy to abstract electrons from H(2)O, generating O(2) and a proton gradient subsequently used for ATP formation. It consists of a core antenna complex that captures photons, and an electron transfer chain that converts photonic excitation into a charge separation. The D1/D2 (PsbA/PsbD) reaction center heterodimer binds P680, the primary electron donor of PSII as well as several subsequent electron acceptors. D2 is needed for assembly of a stable PSII complex. The sequence is that of Photosystem II D2 protein from Synechococcus sp. (strain JA-2-3B'a(2-13)) (Cyanobacteria bacterium Yellowstone B-Prime).